Reading from the N-terminus, the 273-residue chain is Tryptophan synthase alpha chain (273 aa).

Active-site proton acceptor residues include E56 and D67.

This sequence belongs to the TrpA family. Tetramer of two alpha and two beta chains.

It carries out the reaction (1S,2R)-1-C-(indol-3-yl)glycerol 3-phosphate + L-serine = D-glyceraldehyde 3-phosphate + L-tryptophan + H2O. Its pathway is amino-acid biosynthesis; L-tryptophan biosynthesis; L-tryptophan from chorismate: step 5/5. In terms of biological role, the alpha subunit is responsible for the aldol cleavage of indoleglycerol phosphate to indole and glyceraldehyde 3-phosphate. This chain is Tryptophan synthase alpha chain, found in Shewanella baltica (strain OS155 / ATCC BAA-1091).